Reading from the N-terminus, the 397-residue chain is Pentatricopeptide repeat-containing protein At1g80150, mitochondrial (397 aa).

The N-terminal 81 residues, 1 to 81 (MLSLRHIRRF…FAFEDTVSRL (81 aa)), are a transit peptide targeting the mitochondrion. 8 PPR repeats span residues 105 to 139 (REGF…GCKR), 140 to 170 (SVKS…APSK), 176 to 210 (DAVS…GLTP), 211 to 245 (DVVT…GCKP), 246 to 280 (NLTT…QVEP), 281 to 315 (DSIT…GYKP), 316 to 350 (NLKI…KWYP), and 351 to 381 (NLDT…VHRR).

This sequence belongs to the PPR family. P subfamily.

The protein resides in the mitochondrion. The sequence is that of Pentatricopeptide repeat-containing protein At1g80150, mitochondrial from Arabidopsis thaliana (Mouse-ear cress).